We begin with the raw amino-acid sequence, 92 residues long: Alpha-elapitoxin-Lh2a (92 aa).

The N-terminal stretch at 1-21 (MKTLLLTLVVVTIVCLDLGDS) is a signal peptide. Intrachain disulfides connect C24-C41, C34-C62, C47-C51, C66-C77, and C78-C83.

Belongs to the three-finger toxin family. Long-chain subfamily. Type II alpha-neurotoxin sub-subfamily. As to expression, expressed by the venom gland.

Its subcellular location is the secreted. Binds with high affinity to muscular (alpha-1/CHRNA1) and neuronal (alpha-7/CHRNA7) nicotinic acetylcholine receptor (nAChR) and inhibits acetylcholine from binding to the receptor, thereby impairing neuromuscular and neuronal transmission. This Hydrophis hardwickii (Hardwick's spine-bellied seasnake) protein is Alpha-elapitoxin-Lh2a.